The sequence spans 904 residues: Protein translocase subunit SecA (904 aa).

ATP is bound by residues Q87, 105-109 (GEGKT), and D507. The disordered stretch occupies residues 865–887 (GEGAEAAGQQPADAGPKIGRNDP). Residues 868–880 (AEAAGQQPADAGP) show a composition bias toward low complexity. Zn(2+) is bound by residues C888, C890, C899, and H900.

This sequence belongs to the SecA family. In terms of assembly, monomer and homodimer. Part of the essential Sec protein translocation apparatus which comprises SecA, SecYEG and auxiliary proteins SecDF-YajC and YidC. Zn(2+) is required as a cofactor.

The protein resides in the cell inner membrane. It is found in the cytoplasm. The catalysed reaction is ATP + H2O + cellular proteinSide 1 = ADP + phosphate + cellular proteinSide 2.. Functionally, part of the Sec protein translocase complex. Interacts with the SecYEG preprotein conducting channel. Has a central role in coupling the hydrolysis of ATP to the transfer of proteins into and across the cell membrane, serving both as a receptor for the preprotein-SecB complex and as an ATP-driven molecular motor driving the stepwise translocation of polypeptide chains across the membrane. The protein is Protein translocase subunit SecA of Dechloromonas aromatica (strain RCB).